The primary structure comprises 656 residues: Sulfate transporter 1.3 (656 aa).

The disordered stretch occupies residues 1–30 (MSARAHPVDDDGEISPVERSSPRQANTPYV). The Cytoplasmic portion of the chain corresponds to 1–94 (MSARAHPVDD…GRKYNLKLFR (94 aa)). A helical membrane pass occupies residues 95–115 (GDLIAGLTIASLCIPQDIGYA). Residues 116 to 119 (KLAS) are Extracellular-facing. A helical membrane pass occupies residues 120 to 140 (LDPKYGLYSSFVPPLVYACMG). Over 141–144 (SSKD) the chain is Cytoplasmic. A helical transmembrane segment spans residues 145-165 (IAIGPVAVVSLLLGTLLRAEI). The Extracellular segment spans residues 166–176 (DPNTNPNEYLR). The next 2 membrane-spanning stretches (helical) occupy residues 177 to 197 (LAFTSTFFAGVTQAALGFFRL) and 198 to 218 (GFLIDFLSHAAVVGFMGGAAI). The Extracellular segment spans residues 219 to 256 (TIALQQLKGFLGINKFTKKTDIIAVLSSVISSAHHGWN). A helical membrane pass occupies residues 257–277 (WQTILISASFLIFLLISKFIG). At 278-283 (KRNKKL) the chain is on the cytoplasmic side. A helical membrane pass occupies residues 284–304 (FWIPAIAPLVSVIISTFFVYI). The Extracellular segment spans residues 305–342 (TRADKKGVQIVKHLDKGLNPSSLRLIYFSGDYLLKGFR). A helical membrane pass occupies residues 343 to 363 (IGVVSGMVALTEAVAIGRTFA). The Cytoplasmic segment spans residues 364 to 375 (AMKDYQIDGNKE). A helical transmembrane segment spans residues 376–396 (MVALGAMNVIGSMTSCYVSTG). The Extracellular segment spans residues 397–412 (SFSRSAVNFMAGCQTA). The helical transmembrane segment at 413 to 433 (VSNIIMSIVVLLTLLFLTPLF) threads the bilayer. Residues 434 to 441 (KYTPNAIL) lie on the Cytoplasmic side of the membrane. Residues 442-462 (AAIIINAVIPLVDVNATILIF) traverse the membrane as a helical segment. Residues 463–473 (KIDKLDFVACM) lie on the Extracellular side of the membrane. The chain crosses the membrane as a helical span at residues 474-494 (GAFFGVIFVSVEIGLLIAVGI). Topologically, residues 495–656 (SFAKILLQVT…SCSPKLSDEV (162 aa)) are cytoplasmic. One can recognise an STAS domain in the interval 525–648 (QYPEATRIPG…LTVAEAVDSC (124 aa)).

It belongs to the SLC26A/SulP transporter (TC 2.A.53) family. In terms of tissue distribution, expressed in the phloem of cotyledons, hypocotyls and roots.

It is found in the membrane. High-affinity H(+)/sulfate cotransporter that mediates the loading of sulfate into the sieve tube. Plays a central role in the regulation of sulfate assimilation. This Arabidopsis thaliana (Mouse-ear cress) protein is Sulfate transporter 1.3 (SULTR1;3).